The sequence spans 250 residues: 3-deoxy-manno-octulosonate cytidylyltransferase 1 (250 aa).

This sequence belongs to the KdsB family.

It localises to the cytoplasm. The catalysed reaction is 3-deoxy-alpha-D-manno-oct-2-ulosonate + CTP = CMP-3-deoxy-beta-D-manno-octulosonate + diphosphate. It participates in nucleotide-sugar biosynthesis; CMP-3-deoxy-D-manno-octulosonate biosynthesis; CMP-3-deoxy-D-manno-octulosonate from 3-deoxy-D-manno-octulosonate and CTP: step 1/1. It functions in the pathway bacterial outer membrane biogenesis; lipopolysaccharide biosynthesis. In terms of biological role, activates KDO (a required 8-carbon sugar) for incorporation into bacterial lipopolysaccharide in Gram-negative bacteria. This chain is 3-deoxy-manno-octulosonate cytidylyltransferase 1, found in Actinobacillus pleuropneumoniae serotype 5b (strain L20).